A 339-amino-acid polypeptide reads, in one-letter code: Transcription factor IIIA (339 aa).

9 consecutive C2H2-type zinc fingers follow at residues 13–37, 43–67, 73–98, 105–129, 135–159, 162–188, 192–214, 221–246, and 252–276; these read YICS…LCKH, FPCK…SITH, FKCD…NRFH, YVCH…QFTH, YKCP…EKVH, YPCK…KECH, VMCD…KKTH, YCCP…QSFH, and FACE…SVVH. Composition is skewed to basic and acidic residues over residues 275–288 and 305–316; these read VHDP…EKCP and KSKEKSAAKATE. The disordered stretch occupies residues 275–339; that stretch reads VHDPEKRKLK…ETKGSLVIEK (65 aa).

Synthesized in oocytes and, in much lower levels, in somatic cells.

Its subcellular location is the nucleus. Its function is as follows. Involved in ribosomal large subunit biogenesis. Interacts with the internal control region (ICR) of approximately 50 bases within the 5S RNA genes, is required for correct transcription of these genes by RNA polymerase III. Also binds the transcribed 5S RNA's. This is Transcription factor IIIA (gtf3a) from Xenopus borealis (Kenyan clawed frog).